Consider the following 289-residue polypeptide: Heterokaryon incompatibility protein S (289 aa).

Residues 1–227 (MSEPFEIVAG…KIDAIVGRNS (227 aa)) form a globular domain region. A prion domain (PrD) region spans residues 218–289 (KIDAIVGRNS…EYGGKGFWDN (72 aa)).

Homodimer. Forms heterodimers with het-s.

The protein resides in the cytoplasm. Responsible for heterokaryon incompatibility, a process that ensures that during spontaneous, vegetative cell fusion only compatible cells from the same colony survive (non-self-recognition). Interaction with the prion form [het-s] of incompatible cells triggers a lethal reaction that prevents the formation of viable heterokaryons. This Podospora anserina (strain S / ATCC MYA-4624 / DSM 980 / FGSC 10383) (Pleurage anserina) protein is Heterokaryon incompatibility protein S (het-S).